The following is a 339-amino-acid chain: Major pollen allergen Lol p 5b (339 aa).

A signal peptide spans 1-25 (MAVQKHTVALFLAVALVAGPAASYA). 9 consecutive repeat copies span residues 32 to 34 (PAT), 35 to 37 (PAT), 38 to 40 (PAA), 41 to 43 (PAT), 44 to 46 (AAT), 47 to 49 (PAT), 50 to 52 (PAT), 53 to 55 (PAT), and 56 to 58 (PAA). The interval 32-58 (PATPATPAAPATAATPATPATPATPAA) is 9 X 3 AA tandem repeats of [PA]-A-[TA]. The span at 36–58 (ATPAAPATAATPATPATPATPAA) shows a compositional bias: low complexity. The segment at 36 to 65 (ATPAAPATAATPATPATPATPAAVPSGKAT) is disordered. One copy of the 2-1; truncated repeat lies at 285–290 (ATPAAA). The interval 285–334 (ATPAAAATATPTPAAATATATPAAAYATATPAAATATATPAAATATPAAA) is 6 X 9 AA approximate tandem repeats of T-A-T-A-T-P-A-A-A. 4 repeat units span residues 292-300 (TATPTPAAA), 301-309 (TATATPAAA), 310-318 (YATATPAAA), and 319-327 (TATATPAAA). Residues 328–334 (TATPAAA) form a 2-6; truncated repeat.

This sequence belongs to the Poa p IX/Phl p VI allergen family. In terms of tissue distribution, pollen, starch granules.

The chain is Major pollen allergen Lol p 5b from Lolium perenne (Perennial ryegrass).